Here is a 146-residue protein sequence, read N- to C-terminus: UPF0735 ACT domain-containing protein Teth514_2312 (146 aa).

The 76-residue stretch at 71 to 146 (TLSMVLDHMP…GVRKIEILGE (76 aa)) folds into the ACT domain.

It belongs to the UPF0735 family.

In Thermoanaerobacter sp. (strain X514), this protein is UPF0735 ACT domain-containing protein Teth514_2312.